The sequence spans 371 residues: 4-hydroxy-3-methylbut-2-en-1-yl diphosphate synthase (flavodoxin) (371 aa).

[4Fe-4S] cluster contacts are provided by C272, C275, C307, and E314.

This sequence belongs to the IspG family. It depends on [4Fe-4S] cluster as a cofactor.

The catalysed reaction is (2E)-4-hydroxy-3-methylbut-2-enyl diphosphate + oxidized [flavodoxin] + H2O + 2 H(+) = 2-C-methyl-D-erythritol 2,4-cyclic diphosphate + reduced [flavodoxin]. The protein operates within isoprenoid biosynthesis; isopentenyl diphosphate biosynthesis via DXP pathway; isopentenyl diphosphate from 1-deoxy-D-xylulose 5-phosphate: step 5/6. Converts 2C-methyl-D-erythritol 2,4-cyclodiphosphate (ME-2,4cPP) into 1-hydroxy-2-methyl-2-(E)-butenyl 4-diphosphate. The chain is 4-hydroxy-3-methylbut-2-en-1-yl diphosphate synthase (flavodoxin) from Pseudomonas aeruginosa (strain LESB58).